Consider the following 245-residue polypeptide: 4-hydroxy-tetrahydrodipicolinate reductase (245 aa).

NAD(+) contacts are provided by residues 7–12 (GAKGKV), 75–77 (GTT), and 102–105 (APNF). Catalysis depends on H132, which acts as the Proton donor/acceptor. H133 is a binding site for (S)-2,3,4,5-tetrahydrodipicolinate. The active-site Proton donor is K136. 142–143 (GT) serves as a coordination point for (S)-2,3,4,5-tetrahydrodipicolinate.

This sequence belongs to the DapB family.

The protein resides in the cytoplasm. It carries out the reaction (S)-2,3,4,5-tetrahydrodipicolinate + NAD(+) + H2O = (2S,4S)-4-hydroxy-2,3,4,5-tetrahydrodipicolinate + NADH + H(+). The enzyme catalyses (S)-2,3,4,5-tetrahydrodipicolinate + NADP(+) + H2O = (2S,4S)-4-hydroxy-2,3,4,5-tetrahydrodipicolinate + NADPH + H(+). It functions in the pathway amino-acid biosynthesis; L-lysine biosynthesis via DAP pathway; (S)-tetrahydrodipicolinate from L-aspartate: step 4/4. Functionally, catalyzes the conversion of 4-hydroxy-tetrahydrodipicolinate (HTPA) to tetrahydrodipicolinate. This Mycobacterium bovis (strain BCG / Pasteur 1173P2) protein is 4-hydroxy-tetrahydrodipicolinate reductase.